The primary structure comprises 422 residues: UDP-N-acetylglucosamine 1-carboxyvinyltransferase (422 aa).

22 to 23 contributes to the phosphoenolpyruvate binding site; sequence KN. Residue Arg93 participates in UDP-N-acetyl-alpha-D-glucosamine binding. The Proton donor role is filled by Cys117. A 2-(S-cysteinyl)pyruvic acid O-phosphothioketal modification is found at Cys117. UDP-N-acetyl-alpha-D-glucosamine-binding positions include 122–126, Asp308, and Ile330; that span reads RPVDL.

Belongs to the EPSP synthase family. MurA subfamily.

It is found in the cytoplasm. It catalyses the reaction phosphoenolpyruvate + UDP-N-acetyl-alpha-D-glucosamine = UDP-N-acetyl-3-O-(1-carboxyvinyl)-alpha-D-glucosamine + phosphate. It functions in the pathway cell wall biogenesis; peptidoglycan biosynthesis. Functionally, cell wall formation. Adds enolpyruvyl to UDP-N-acetylglucosamine. This Legionella pneumophila (strain Paris) protein is UDP-N-acetylglucosamine 1-carboxyvinyltransferase.